A 260-amino-acid chain; its full sequence is tRNA pseudouridine synthase A (260 aa).

Residue Asp-52 is the Nucleophile of the active site. Tyr-111 contributes to the substrate binding site.

The protein belongs to the tRNA pseudouridine synthase TruA family. Homodimer.

The enzyme catalyses uridine(38/39/40) in tRNA = pseudouridine(38/39/40) in tRNA. In terms of biological role, formation of pseudouridine at positions 38, 39 and 40 in the anticodon stem and loop of transfer RNAs. In Roseobacter denitrificans (strain ATCC 33942 / OCh 114) (Erythrobacter sp. (strain OCh 114)), this protein is tRNA pseudouridine synthase A.